Consider the following 104-residue polypeptide: Replication restart protein PriB (104 aa).

The region spanning 1–101 (MTNRLVLSGT…LHAEQIELID (101 aa)) is the SSB domain.

This sequence belongs to the PriB family. In terms of assembly, homodimer. Interacts with PriA and DnaT. Component of the replication restart primosome. Primosome assembly occurs via a 'hand-off' mechanism. PriA binds to replication forks, subsequently PriB then DnaT bind; DnaT then displaces ssDNA to generate the helicase loading substrate.

In terms of biological role, involved in the restart of stalled replication forks, which reloads the replicative helicase on sites other than the origin of replication; the PriA-PriB pathway is the major replication restart pathway. During primosome assembly it facilitates complex formation between PriA and DnaT on DNA; stabilizes PriA on DNA. Stimulates the DNA unwinding activity of PriA helicase. In Escherichia coli (strain ATCC 8739 / DSM 1576 / NBRC 3972 / NCIMB 8545 / WDCM 00012 / Crooks), this protein is Replication restart protein PriB.